Here is a 129-residue protein sequence, read N- to C-terminus: UPF0225 protein XOO0258 (129 aa).

It belongs to the UPF0225 family.

This chain is UPF0225 protein XOO0258, found in Xanthomonas oryzae pv. oryzae (strain MAFF 311018).